The chain runs to 93 residues: UPF0369 protein RC0209 (93 aa).

The segment at 1–24 is disordered; that stretch reads MDDKKDNRHLSKPAYREECTGDTE. Residues 8 to 55 enclose the RPE1 insert domain; that stretch reads RHLSKPAYREECTGDTERSTTAYMDILEDVSTGSTSKLPLEAKFVKIS.

Belongs to the SDHAF4 family.

In Rickettsia conorii (strain ATCC VR-613 / Malish 7), this protein is UPF0369 protein RC0209.